The sequence spans 89 residues: MALTAEQKKEILGQYGLHDTDTGSPEAQVALLTKRIQDLTEHLKVHKHDHHSRRGLLLLVGRRRRLLKYVAQVDVARYRSLIERLGLRR.

This sequence belongs to the universal ribosomal protein uS15 family. Part of the 30S ribosomal subunit. Forms a bridge to the 50S subunit in the 70S ribosome, contacting the 23S rRNA.

Functionally, one of the primary rRNA binding proteins, it binds directly to 16S rRNA where it helps nucleate assembly of the platform of the 30S subunit by binding and bridging several RNA helices of the 16S rRNA. In terms of biological role, forms an intersubunit bridge (bridge B4) with the 23S rRNA of the 50S subunit in the ribosome. In Mycolicibacterium smegmatis (strain ATCC 700084 / mc(2)155) (Mycobacterium smegmatis), this protein is Small ribosomal subunit protein uS15.